The primary structure comprises 159 residues: Ribosomal RNA large subunit methyltransferase H (159 aa).

Gly108 contributes to the S-adenosyl-L-methionine binding site.

The protein belongs to the RNA methyltransferase RlmH family. Homodimer.

Its subcellular location is the cytoplasm. It catalyses the reaction pseudouridine(1915) in 23S rRNA + S-adenosyl-L-methionine = N(3)-methylpseudouridine(1915) in 23S rRNA + S-adenosyl-L-homocysteine + H(+). Specifically methylates the pseudouridine at position 1915 (m3Psi1915) in 23S rRNA. The chain is Ribosomal RNA large subunit methyltransferase H from Lactobacillus johnsonii (strain CNCM I-12250 / La1 / NCC 533).